An 878-amino-acid chain; its full sequence is Alanine--tRNA ligase (878 aa).

His-566, His-570, Cys-668, and His-672 together coordinate Zn(2+).

The protein belongs to the class-II aminoacyl-tRNA synthetase family. Zn(2+) is required as a cofactor.

The protein resides in the cytoplasm. The catalysed reaction is tRNA(Ala) + L-alanine + ATP = L-alanyl-tRNA(Ala) + AMP + diphosphate. Catalyzes the attachment of alanine to tRNA(Ala) in a two-step reaction: alanine is first activated by ATP to form Ala-AMP and then transferred to the acceptor end of tRNA(Ala). Also edits incorrectly charged Ser-tRNA(Ala) and Gly-tRNA(Ala) via its editing domain. In Geobacillus thermodenitrificans (strain NG80-2), this protein is Alanine--tRNA ligase.